We begin with the raw amino-acid sequence, 82 residues long: Small ribosomal subunit protein bS18 (82 aa).

It belongs to the bacterial ribosomal protein bS18 family. In terms of assembly, part of the 30S ribosomal subunit. Forms a tight heterodimer with protein bS6.

In terms of biological role, binds as a heterodimer with protein bS6 to the central domain of the 16S rRNA, where it helps stabilize the platform of the 30S subunit. In Rhizobium rhizogenes (strain K84 / ATCC BAA-868) (Agrobacterium radiobacter), this protein is Small ribosomal subunit protein bS18.